A 754-amino-acid polypeptide reads, in one-letter code: Elongation factor G-2, mitochondrial (754 aa).

Positions 63–340 (DKLRNIGISA…GVVSFLPSPN (278 aa)) constitute a tr-type G domain. GTP-binding positions include 72-79 (AHIDSGKT), 139-143 (DTPGH), and 193-196 (NKLD).

It belongs to the TRAFAC class translation factor GTPase superfamily. Classic translation factor GTPase family. EF-G/EF-2 subfamily. Expressed in cotyledons and adult leaves at the same levels.

Its subcellular location is the mitochondrion. Its pathway is protein biosynthesis; polypeptide chain elongation. Functionally, mitochondrial GTPase that catalyzes the GTP-dependent ribosomal translocation step during translation elongation. During this step, the ribosome changes from the pre-translocational (PRE) to the post-translocational (POST) state as the newly formed A-site-bound peptidyl-tRNA and P-site-bound deacylated tRNA move to the P and E sites, respectively. Catalyzes the coordinated movement of the two tRNA molecules, the mRNA and conformational changes in the ribosome. This Arabidopsis thaliana (Mouse-ear cress) protein is Elongation factor G-2, mitochondrial (MEFG2).